A 261-amino-acid chain; its full sequence is Triosephosphate isomerase (261 aa).

10-12 (NWK) contributes to the substrate binding site. Histidine 100 (electrophile) is an active-site residue. Glutamate 172 (proton acceptor) is an active-site residue. Substrate is bound by residues glycine 178, serine 218, and 239-240 (GG).

The protein belongs to the triosephosphate isomerase family. Homodimer.

Its subcellular location is the cytoplasm. The enzyme catalyses D-glyceraldehyde 3-phosphate = dihydroxyacetone phosphate. Its pathway is carbohydrate biosynthesis; gluconeogenesis. It participates in carbohydrate degradation; glycolysis; D-glyceraldehyde 3-phosphate from glycerone phosphate: step 1/1. Functionally, involved in the gluconeogenesis. Catalyzes stereospecifically the conversion of dihydroxyacetone phosphate (DHAP) to D-glyceraldehyde-3-phosphate (G3P). This is Triosephosphate isomerase from Mycobacterium sp. (strain JLS).